Reading from the N-terminus, the 228-residue chain is 2,3-bisphosphoglycerate-dependent phosphoglycerate mutase (228 aa).

Substrate contacts are provided by residues 8-15 (RHGQSEWN), 21-22 (TG), Arg-60, 87-90 (ERHY), Lys-98, 114-115 (RR), and 180-181 (GN). His-9 (tele-phosphohistidine intermediate) is an active-site residue. Catalysis depends on Glu-87, which acts as the Proton donor/acceptor.

It belongs to the phosphoglycerate mutase family. BPG-dependent PGAM subfamily. In terms of assembly, homodimer.

The enzyme catalyses (2R)-2-phosphoglycerate = (2R)-3-phosphoglycerate. Its pathway is carbohydrate degradation; glycolysis; pyruvate from D-glyceraldehyde 3-phosphate: step 3/5. Functionally, catalyzes the interconversion of 2-phosphoglycerate and 3-phosphoglycerate. The sequence is that of 2,3-bisphosphoglycerate-dependent phosphoglycerate mutase from Zymomonas mobilis subsp. mobilis (strain ATCC 31821 / ZM4 / CP4).